The primary structure comprises 439 residues: Probable non-inhibitory serpin-Z9 (439 aa).

A disordered region spans residues 12 to 44 (RRPPFPAGDANHRRLSSAPAPKPEAPAEAMPPP). A compositionally biased stretch (pro residues) spans 31–44 (APKPEAPAEAMPPP). The interval 389–413 (GIEETSVSMGLGKPLPAQHFKADHP) is RCL.

Belongs to the serpin family.

The protein is Probable non-inhibitory serpin-Z9 of Oryza sativa subsp. japonica (Rice).